The following is a 142-amino-acid chain: MKTFSAKPQSVTRDWYVVDATDKTLGRLATEIARRLRGKHKPEYTPHVDTGDYIVVVNAEKVRVTGNKAQAKNYYRHTGYPGGLRSMSFEKLIDHAPERVIESAVKGMLPKGPLGRAMYSKLKVYAGAEHPHAAQQPLELNL.

It belongs to the universal ribosomal protein uL13 family. In terms of assembly, part of the 50S ribosomal subunit.

In terms of biological role, this protein is one of the early assembly proteins of the 50S ribosomal subunit, although it is not seen to bind rRNA by itself. It is important during the early stages of 50S assembly. The sequence is that of Large ribosomal subunit protein uL13 from Chromohalobacter salexigens (strain ATCC BAA-138 / DSM 3043 / CIP 106854 / NCIMB 13768 / 1H11).